A 975-amino-acid chain; its full sequence is Ionotropic receptor 21a (975 aa).

The N-terminal stretch at 1–21 (MFKRIVLAVINLVFLIVSTTA) is a signal peptide. N-linked (GlcNAc...) asparagine glycans are attached at residues Asn67, Asn177, and Asn355. The helical transmembrane segment at 433–453 (WPVWVAVILIYLLAIFPLAFS) threads the bilayer. A glycan (N-linked (GlcNAc...) asparagine) is linked at Asn464. A helical transmembrane segment spans residues 505 to 525 (IYWVFTIIITACYTGSIIAFI). 3 N-linked (GlcNAc...) asparagine glycosylation sites follow: Asn561, Asn586, and Asn611. Residues 708-728 (MFLLMLFGYVVALGVLISEWV) traverse the membrane as a helical segment. 2 disordered regions span residues 757–839 (ATAG…HSLS) and 911–938 (SPHS…RKEM). Polar residues-rich tracts occupy residues 760–777 (GSDN…TNRN) and 788–800 (VENS…NGSA). 2 N-linked (GlcNAc...) asparagine glycosylation sites follow: Asn763 and Asn797.

It belongs to the glutamate-gated ion channel (TC 1.A.10.1) family. As to expression, in both female and male antenna, expressed specifically in 3 sensory neurons of flagellomere 13 segment (at protein level).

The protein localises to the cell projection. Its subcellular location is the cilium membrane. Functionally, integral part of a neural sensory system in the antenna that provides the neural basis for the response to environmental changes in temperature (thermosensation). Specifically, required for thermosensing by the cooling cell. Plays a role in heat seeking and heat-stimulated blood feeding behavior. This chain is Ionotropic receptor 21a, found in Anopheles gambiae (African malaria mosquito).